The following is a 76-amino-acid chain: uncharacterized protein (76 aa).

This sequence to L.innocua lin1255, lin1742 and lin2600.

This is an uncharacterized protein from Listeria innocua serovar 6a (strain ATCC BAA-680 / CLIP 11262).